A 216-amino-acid chain; its full sequence is Thiamine-phosphate synthase (216 aa).

4-amino-2-methyl-5-(diphosphooxymethyl)pyrimidine-binding positions include 40–44 and Asn72; that span reads QLRIK. Asp73 and Asp92 together coordinate Mg(2+). Ser111 contributes to the 4-amino-2-methyl-5-(diphosphooxymethyl)pyrimidine binding site. Residue 137 to 139 participates in 2-[(2R,5Z)-2-carboxy-4-methylthiazol-5(2H)-ylidene]ethyl phosphate binding; sequence TTT. Position 140 (Lys140) interacts with 4-amino-2-methyl-5-(diphosphooxymethyl)pyrimidine. 2-[(2R,5Z)-2-carboxy-4-methylthiazol-5(2H)-ylidene]ethyl phosphate-binding positions include Gly169 and 189–190; that span reads VS.

It belongs to the thiamine-phosphate synthase family. Requires Mg(2+) as cofactor.

The catalysed reaction is 2-[(2R,5Z)-2-carboxy-4-methylthiazol-5(2H)-ylidene]ethyl phosphate + 4-amino-2-methyl-5-(diphosphooxymethyl)pyrimidine + 2 H(+) = thiamine phosphate + CO2 + diphosphate. It catalyses the reaction 2-(2-carboxy-4-methylthiazol-5-yl)ethyl phosphate + 4-amino-2-methyl-5-(diphosphooxymethyl)pyrimidine + 2 H(+) = thiamine phosphate + CO2 + diphosphate. The enzyme catalyses 4-methyl-5-(2-phosphooxyethyl)-thiazole + 4-amino-2-methyl-5-(diphosphooxymethyl)pyrimidine + H(+) = thiamine phosphate + diphosphate. It participates in cofactor biosynthesis; thiamine diphosphate biosynthesis; thiamine phosphate from 4-amino-2-methyl-5-diphosphomethylpyrimidine and 4-methyl-5-(2-phosphoethyl)-thiazole: step 1/1. Functionally, condenses 4-methyl-5-(beta-hydroxyethyl)thiazole monophosphate (THZ-P) and 2-methyl-4-amino-5-hydroxymethyl pyrimidine pyrophosphate (HMP-PP) to form thiamine monophosphate (TMP). This chain is Thiamine-phosphate synthase, found in Photorhabdus laumondii subsp. laumondii (strain DSM 15139 / CIP 105565 / TT01) (Photorhabdus luminescens subsp. laumondii).